The following is a 326-amino-acid chain: Acetyl-coenzyme A carboxylase carboxyl transferase subunit beta (326 aa).

The CoA carboxyltransferase N-terminal domain occupies 32-301; the sequence is LWTKCPACGV…ILPPLNADSN (270 aa). Residues Cys36, Cys39, Cys55, and Cys58 each contribute to the Zn(2+) site. The segment at 36–58 adopts a C4-type zinc-finger fold; that stretch reads CPACGVLTYTKDLQGNWMVCVEC.

It belongs to the AccD/PCCB family. Acetyl-CoA carboxylase is a heterohexamer composed of biotin carboxyl carrier protein (AccB), biotin carboxylase (AccC) and two subunits each of ACCase subunit alpha (AccA) and ACCase subunit beta (AccD). Zn(2+) serves as cofactor.

Its subcellular location is the cytoplasm. The catalysed reaction is N(6)-carboxybiotinyl-L-lysyl-[protein] + acetyl-CoA = N(6)-biotinyl-L-lysyl-[protein] + malonyl-CoA. Its pathway is lipid metabolism; malonyl-CoA biosynthesis; malonyl-CoA from acetyl-CoA: step 1/1. In terms of biological role, component of the acetyl coenzyme A carboxylase (ACC) complex. Biotin carboxylase (BC) catalyzes the carboxylation of biotin on its carrier protein (BCCP) and then the CO(2) group is transferred by the transcarboxylase to acetyl-CoA to form malonyl-CoA. The chain is Acetyl-coenzyme A carboxylase carboxyl transferase subunit beta from Synechocystis sp. (strain ATCC 27184 / PCC 6803 / Kazusa).